Here is a 196-residue protein sequence, read N- to C-terminus: Somatotropin (196 aa).

The signal sequence occupies residues 1 to 16; it reads MDKVILVLLMSLGASS. Q17 bears the Pyrrolidone carboxylic acid mark. Residue H35 participates in Zn(2+) binding. A disulfide bond links C67 and C169. Position 178 (E178) interacts with Zn(2+). C186 and C194 are joined by a disulfide.

Belongs to the somatotropin/prolactin family.

The protein resides in the secreted. In terms of biological role, growth hormone plays an important role in growth control and is involved in the regulation of several anabolic processes. Implicated as an osmoregulatory substance important for seawater adaptation. The protein is Somatotropin (gh) of Takifugu rubripes (Japanese pufferfish).